Consider the following 387-residue polypeptide: Putative protein FAM157C (387 aa).

Disordered regions lie at residues 1–21 (MGPLFTTIPGAHSGPMRPLPK), 182–226 (TARP…GAEP), and 329–353 (RARDPAPTNFPLKCQKQRGASTSSG).

This sequence belongs to the FAM157 family.

This is Putative protein FAM157C (FAM157C) from Homo sapiens (Human).